A 464-amino-acid polypeptide reads, in one-letter code: Alpha-2A adrenergic receptor (464 aa).

At 1 to 47 (MFRQEQRWPRQLWPMGSLQPDSGNASWNGTEGPGGGTRATPYSLQVT) the chain is on the extracellular side. Positions 13-34 (WPMGSLQPDSGNASWNGTEGPG) are disordered. Positions 19–29 (QPDSGNASWNG) are enriched in polar residues. N-linked (GlcNAc...) asparagine glycans are attached at residues N24 and N28. Residues 48-73 (VTLVCLVGLLILLTVFGNVLVIIAVF) traverse the membrane as a helical segment. At 74–84 (TSRALKAPQNL) the chain is on the cytoplasmic side. The helical transmembrane segment at 85–110 (FLVSLASADILVATLVIPFSLANEVM) threads the bilayer. Over 111-120 (GYWYFGKAWC) the chain is Extracellular. An intrachain disulfide couples C120 to C201. Residues 121–143 (EIYLALDVLFCTSSIVHLCAISL) traverse the membrane as a helical segment. At 144–163 (DRYWSITQAIEYNLKRTPRR) the chain is on the cytoplasmic side. The chain crosses the membrane as a helical span at residues 164-187 (IKAIIVTVWVISAVISFPPLISFE). Topologically, residues 188 to 206 (KAGGGGQQPAEPRCEINDQ) are extracellular. The helical transmembrane segment at 207–231 (KWYVISSSIGSFFAPCLIMILVYVR) threads the bilayer. Topologically, residues 232–388 (IYQIAKRRTR…RQNREKRFTF (157 aa)) are cytoplasmic. Residues 240–378 (TRVPPSRRGP…GGAKASRWRG (139 aa)) are disordered. Low complexity predominate over residues 251 to 268 (AHAAAPPGGAERRPNGLG). A compositionally biased stretch (basic and acidic residues) spans 312-329 (SSEHAERPPGARRPERGL). The residue at position 345 (S345) is a Phosphoserine. Residues 354–363 (AGSGTSGSGP) show a composition bias toward gly residues. At R367 the chain carries Omega-N-methylarginine. A helical transmembrane segment spans residues 389-413 (VLAVVIGVFVVCWFPFFFTYTLTAV). The Extracellular segment spans residues 414–423 (GCSVPRTLFK). The helical transmembrane segment at 424 to 444 (FFFWFGYCNSSLNPVIYTIFN) threads the bilayer. At 445–464 (HDFRRAFKKILCRGDRKRIV) the chain is on the cytoplasmic side. C456 carries the S-palmitoyl cysteine lipid modification.

It belongs to the G-protein coupled receptor 1 family. Adrenergic receptor subfamily. ADRA2A sub-subfamily. Component of the ADA2A-containing complex (ATAC), composed of KAT14, KAT2A, TADA2L, TADA3L, ZZ3, MBIP, WDR5, YEATS2, CCDC101 and DR1.

It is found in the cell membrane. Alpha-2 adrenergic receptors mediate the catecholamine-induced inhibition of adenylate cyclase through the action of G proteins. Component of the ATAC complex, a complex with histone acetyltransferase activity on histones H3 and H4. This chain is Alpha-2A adrenergic receptor, found in Cavia porcellus (Guinea pig).